The following is a 187-amino-acid chain: uncharacterized protein (187 aa).

A helical membrane pass occupies residues 8–28; the sequence is ITFFIILLICLICILLLLVVF. Residues 99 to 153 form a disordered region; the sequence is PLENRRDMEAEEENQINEKQEPENAGETGQEEDDGLQKIHTSVTRTPSVVESQKR. Positions 137–149 are enriched in polar residues; that stretch reads IHTSVTRTPSVVE.

Its subcellular location is the membrane. This is an uncharacterized protein from Homo sapiens (Human).